We begin with the raw amino-acid sequence, 190 residues long: MDLLGCVLVSETPEGTCSGVIVETEAYRPEDPACHAYRGPSMRNRTLFGGPGLAYVYLSYGMHRLLNAVCEGEGVGSAVLIRSLAPLEGVPLMRRRRGRAADLCNGPGRLAESLGVGLSLDGHDLTLGEGLYIAPGPPPRGEIVSTTRIGVSRGAELPWRYLVLGERVSVPPRRISGRGLRRAWNVREPA.

This sequence belongs to the DNA glycosylase MPG family.

The protein is Putative 3-methyladenine DNA glycosylase of Rubrobacter xylanophilus (strain DSM 9941 / JCM 11954 / NBRC 16129 / PRD-1).